A 110-amino-acid polypeptide reads, in one-letter code: Class I hydrophobin Po.HYD (110 aa).

An N-terminal signal peptide occupies residues 1–27 (MFSKATLFFTTVSRYRDTQAPIPTGQT). Disulfide bonds link Cys35/Cys91, Cys42/Cys85, Cys43/Cys75, and Cys92/Cys105.

This sequence belongs to the fungal hydrophobin family. In terms of assembly, self-assembles to form functional amyloid fibrils called rodlets. Self-assembly into fibrillar rodlets occurs spontaneously at hydrophobic:hydrophilic interfaces and the rodlets further associate laterally to form amphipathic monolayers.

Its subcellular location is the secreted. It is found in the cell wall. Its function is as follows. Aerial growth, conidiation, and dispersal of filamentous fungi in the environment rely upon a capability of their secreting small amphipathic proteins called hydrophobins (HPBs) with low sequence identity. Class I can self-assemble into an outermost layer of rodlet bundles on aerial cell surfaces, conferring cellular hydrophobicity that supports fungal growth, development and dispersal; whereas Class II form highly ordered films at water-air interfaces through intermolecular interactions but contribute nothing to the rodlet structure. In Pleurotus ostreatus (Oyster mushroom), this protein is Class I hydrophobin Po.HYD.